The chain runs to 165 residues: Large ribosomal subunit protein uL11 (165 aa).

S38 is subject to Phosphoserine. K40 is covalently cross-linked (Glycyl lysine isopeptide (Lys-Gly) (interchain with G-Cter in SUMO2)). K48 is covalently cross-linked (Glycyl lysine isopeptide (Lys-Gly) (interchain with G-Cter in ubiquitin)). K54 carries the N6-acetyllysine modification. A Glycyl lysine isopeptide (Lys-Gly) (interchain with G-Cter in ubiquitin) cross-link involves residue K83. S165 is subject to Phosphoserine.

Belongs to the universal ribosomal protein uL11 family. Component of the large ribosomal subunit. Mature ribosomes consist of a small (40S) and a large (60S) subunit. The 40S subunit contains about 33 different proteins and 1 molecule of RNA (18S). The 60S subunit contains about 49 different proteins and 3 molecules of RNA (28S, 5.8S and 5S). In terms of processing, ubiquitinated at Lys-48 and Lys-83 by RNF14 and RNF25 in response to ribosome collisions (ribosome stalling).

It localises to the cytoplasm. Its function is as follows. Component of the large ribosomal subunit. The ribosome is a large ribonucleoprotein complex responsible for the synthesis of proteins in the cell. Binds directly to 26S ribosomal RNA. This is Large ribosomal subunit protein uL11 (Rpl12) from Rattus norvegicus (Rat).